Here is a 90-residue protein sequence, read N- to C-terminus: Probable Fe(2+)-trafficking protein (90 aa).

The protein belongs to the Fe(2+)-trafficking protein family.

Functionally, could be a mediator in iron transactions between iron acquisition and iron-requiring processes, such as synthesis and/or repair of Fe-S clusters in biosynthetic enzymes. This is Probable Fe(2+)-trafficking protein from Nitrosococcus oceani (strain ATCC 19707 / BCRC 17464 / JCM 30415 / NCIMB 11848 / C-107).